Here is a 419-residue protein sequence, read N- to C-terminus: Serine hydroxymethyltransferase 1 (419 aa).

(6S)-5,6,7,8-tetrahydrofolate-binding positions include leucine 121 and glycine 125–leucine 127. Position 230 is an N6-(pyridoxal phosphate)lysine (lysine 230). Position 356–358 (serine 356–phenylalanine 358) interacts with (6S)-5,6,7,8-tetrahydrofolate.

The protein belongs to the SHMT family. In terms of assembly, homodimer. Pyridoxal 5'-phosphate serves as cofactor.

The protein resides in the cytoplasm. The enzyme catalyses (6R)-5,10-methylene-5,6,7,8-tetrahydrofolate + glycine + H2O = (6S)-5,6,7,8-tetrahydrofolate + L-serine. It participates in one-carbon metabolism; tetrahydrofolate interconversion. The protein operates within amino-acid biosynthesis; glycine biosynthesis; glycine from L-serine: step 1/1. In terms of biological role, catalyzes the reversible interconversion of serine and glycine with tetrahydrofolate (THF) serving as the one-carbon carrier. This reaction serves as the major source of one-carbon groups required for the biosynthesis of purines, thymidylate, methionine, and other important biomolecules. Also exhibits THF-independent aldolase activity toward beta-hydroxyamino acids, producing glycine and aldehydes, via a retro-aldol mechanism. The chain is Serine hydroxymethyltransferase 1 from Colwellia psychrerythraea (strain 34H / ATCC BAA-681) (Vibrio psychroerythus).